The chain runs to 163 residues: Transcriptional repressor NrdR (163 aa).

The segment at 3–34 is a zinc-finger region; it reads CPSCNSESSRVVDSRSIEMGVSIRRRRECSEC. In terms of domain architecture, ATP-cone spans 46-136; the sequence is LLVVKRNGVT…VYKSFNCAED (91 aa).

Belongs to the NrdR family. Zn(2+) is required as a cofactor.

Functionally, negatively regulates transcription of bacterial ribonucleotide reductase nrd genes and operons by binding to NrdR-boxes. The protein is Transcriptional repressor NrdR of Corynebacterium jeikeium (strain K411).